A 241-amino-acid polypeptide reads, in one-letter code: MAAQGRGRVGGGKEERVSARSDSELLLHPELLSEEFLLLTLEQKNILVKNDVKMDKDGLTDLYIQHAIPLPQRDLPKSRWGKMMEKKRKQNEPKSENKSVTAVGGLRKRPLIVFDGSSTSTSIKVKKTENGATDRLKPPPAGSITNTVRRLSAPSNASTYISASSLSEDAKLEVRNNEAKQNNISKTNSSVLVNLKTHPLSPVAGTTVVKLKRSVPKDESDLPNDLKPTEAKKKIQHCTWP.

Disordered stretches follow at residues 1-21, 82-102, and 212-241; these read MAAQ…SARS, KMME…SVTA, and KRSV…CTWP. The span at 11 to 21 shows a compositional bias: basic and acidic residues; that stretch reads GGKEERVSARS.

It belongs to the ashwin family.

The protein localises to the nucleus. In Gallus gallus (Chicken), this protein is Ashwin.